The chain runs to 381 residues: Chaperone protein DnaJ (381 aa).

Residues 5-70 (DFYEVLGVGR…QKKAAYDQYG (66 aa)) form the J domain. The segment at 136-214 (GCSKEIEVPT…CHGQGRKQKT (79 aa)) adopts a CR-type zinc-finger fold. Residues C149, C152, C166, C169, C188, C191, C202, and C205 each coordinate Zn(2+). CXXCXGXG motif repeat units follow at residues 149 to 156 (CDACDGSG), 166 to 173 (CGTCHGHG), 188 to 195 (CPTCHGKG), and 202 to 209 (CNVCHGQG).

The protein belongs to the DnaJ family. Homodimer. Zn(2+) is required as a cofactor.

It localises to the cytoplasm. Functionally, participates actively in the response to hyperosmotic and heat shock by preventing the aggregation of stress-denatured proteins and by disaggregating proteins, also in an autonomous, DnaK-independent fashion. Unfolded proteins bind initially to DnaJ; upon interaction with the DnaJ-bound protein, DnaK hydrolyzes its bound ATP, resulting in the formation of a stable complex. GrpE releases ADP from DnaK; ATP binding to DnaK triggers the release of the substrate protein, thus completing the reaction cycle. Several rounds of ATP-dependent interactions between DnaJ, DnaK and GrpE are required for fully efficient folding. Also involved, together with DnaK and GrpE, in the DNA replication of plasmids through activation of initiation proteins. The sequence is that of Chaperone protein DnaJ from Vibrio cholerae serotype O1 (strain ATCC 39541 / Classical Ogawa 395 / O395).